Reading from the N-terminus, the 363-residue chain is UDP-N-acetylglucosamine--N-acetylmuramyl-(pentapeptide) pyrophosphoryl-undecaprenol N-acetylglucosamine transferase (363 aa).

UDP-N-acetyl-alpha-D-glucosamine-binding positions include 14-16 (TGG), Arg171, Ser200, and Gln290.

It belongs to the glycosyltransferase 28 family. MurG subfamily.

The protein localises to the cell inner membrane. It catalyses the reaction di-trans,octa-cis-undecaprenyl diphospho-N-acetyl-alpha-D-muramoyl-L-alanyl-D-glutamyl-meso-2,6-diaminopimeloyl-D-alanyl-D-alanine + UDP-N-acetyl-alpha-D-glucosamine = di-trans,octa-cis-undecaprenyl diphospho-[N-acetyl-alpha-D-glucosaminyl-(1-&gt;4)]-N-acetyl-alpha-D-muramoyl-L-alanyl-D-glutamyl-meso-2,6-diaminopimeloyl-D-alanyl-D-alanine + UDP + H(+). It functions in the pathway cell wall biogenesis; peptidoglycan biosynthesis. Cell wall formation. Catalyzes the transfer of a GlcNAc subunit on undecaprenyl-pyrophosphoryl-MurNAc-pentapeptide (lipid intermediate I) to form undecaprenyl-pyrophosphoryl-MurNAc-(pentapeptide)GlcNAc (lipid intermediate II). The sequence is that of UDP-N-acetylglucosamine--N-acetylmuramyl-(pentapeptide) pyrophosphoryl-undecaprenol N-acetylglucosamine transferase from Borrelia garinii subsp. bavariensis (strain ATCC BAA-2496 / DSM 23469 / PBi) (Borreliella bavariensis).